A 238-amino-acid chain; its full sequence is Uridylate kinase (238 aa).

Position 12–15 (12–15) interacts with ATP; the sequence is KLSG. Glycine 54 serves as a coordination point for UMP. The ATP site is built by glycine 55 and arginine 59. UMP contacts are provided by residues aspartate 74 and 135-142; that span reads TGNPYFTT. ATP is bound by residues threonine 162, asparagine 163, tyrosine 168, and aspartate 171.

The protein belongs to the UMP kinase family. Homohexamer.

Its subcellular location is the cytoplasm. The catalysed reaction is UMP + ATP = UDP + ADP. The protein operates within pyrimidine metabolism; CTP biosynthesis via de novo pathway; UDP from UMP (UMPK route): step 1/1. Inhibited by UTP. Catalyzes the reversible phosphorylation of UMP to UDP. In Nitrobacter winogradskyi (strain ATCC 25391 / DSM 10237 / CIP 104748 / NCIMB 11846 / Nb-255), this protein is Uridylate kinase.